The chain runs to 253 residues: 3-deoxy-manno-octulosonate cytidylyltransferase (253 aa).

This sequence belongs to the KdsB family.

The protein localises to the cytoplasm. It catalyses the reaction 3-deoxy-alpha-D-manno-oct-2-ulosonate + CTP = CMP-3-deoxy-beta-D-manno-octulosonate + diphosphate. It functions in the pathway nucleotide-sugar biosynthesis; CMP-3-deoxy-D-manno-octulosonate biosynthesis; CMP-3-deoxy-D-manno-octulosonate from 3-deoxy-D-manno-octulosonate and CTP: step 1/1. It participates in bacterial outer membrane biogenesis; lipopolysaccharide biosynthesis. Its function is as follows. Activates KDO (a required 8-carbon sugar) for incorporation into bacterial lipopolysaccharide in Gram-negative bacteria. The protein is 3-deoxy-manno-octulosonate cytidylyltransferase of Proteus mirabilis (strain HI4320).